The chain runs to 59 residues: Large ribosomal subunit protein uL30 (59 aa).

Belongs to the universal ribosomal protein uL30 family. As to quaternary structure, part of the 50S ribosomal subunit.

The sequence is that of Large ribosomal subunit protein uL30 from Desulfatibacillum aliphaticivorans.